Here is a 26-residue protein sequence, read N- to C-terminus: uncharacterized protein (26 aa).

The protein resides in the plastid. The protein localises to the chloroplast. This is an uncharacterized protein from Trieres chinensis (Marine centric diatom).